The chain runs to 360 residues: Flavone O-methyltransferase 1 (360 aa).

127–133 (MNQDKVL) provides a ligand contact to substrate. The interval 159-177 (AFEYHGTDPRFNRVFNEGM) is substrate binding. Residues Gly205, Asp228, Asp248, Met249, and Lys262 each coordinate S-adenosyl-L-methionine. His266 serves as the catalytic Proton acceptor.

This sequence belongs to the class I-like SAM-binding methyltransferase superfamily. Cation-independent O-methyltransferase family. COMT subfamily. Homodimer.

In terms of biological role, flavone-specific O-methyltransferase with a preference for flavones &gt; flavonols. Active with tricetin, luteolin, quercitin and eriodictyol. Very low activity with phenylpropanoids (5-hydroxyferulic acid and caffeic acid). Catalyzes the sequential O-methylation of tricetin via 3'-O-methyltricetin, 3',5'-O-methyltricetin to 3',4',5'-O-trimethyltricetin. In Triticum aestivum (Wheat), this protein is Flavone O-methyltransferase 1 (OMT1).